The sequence spans 545 residues: Pseudouridylate synthase RPUSD2 (545 aa).

Residues 48 to 121 (GLRASHQQNG…PPPKKRRTGV (74 aa)) are disordered. At serine 68 the chain carries Phosphoserine. Aspartate 274 is a catalytic residue. The residue at position 477 (threonine 477) is a Phosphothreonine.

It belongs to the pseudouridine synthase RluA family.

The enzyme catalyses a uridine in mRNA = a pseudouridine in mRNA. Pseudouridine synthase that catalyzes pseudouridylation of mRNAs. In Homo sapiens (Human), this protein is Pseudouridylate synthase RPUSD2.